Consider the following 371-residue polypeptide: Flagellar P-ring protein (371 aa).

An N-terminal signal peptide occupies residues 1-28 (MPARPTPPAVPLALALAAALAAPAPAAA).

It belongs to the FlgI family. As to quaternary structure, the basal body constitutes a major portion of the flagellar organelle and consists of four rings (L,P,S, and M) mounted on a central rod.

The protein resides in the periplasm. Its subcellular location is the bacterial flagellum basal body. Its function is as follows. Assembles around the rod to form the L-ring and probably protects the motor/basal body from shearing forces during rotation. This chain is Flagellar P-ring protein, found in Anaeromyxobacter dehalogenans (strain 2CP-C).